The following is a 306-amino-acid chain: Elongation factor Ts (306 aa).

Residues 79 to 82 form an involved in Mg(2+) ion dislocation from EF-Tu region; that stretch reads TDFV.

This sequence belongs to the EF-Ts family.

The protein localises to the cytoplasm. In terms of biological role, associates with the EF-Tu.GDP complex and induces the exchange of GDP to GTP. It remains bound to the aminoacyl-tRNA.EF-Tu.GTP complex up to the GTP hydrolysis stage on the ribosome. This chain is Elongation factor Ts, found in Mesorhizobium japonicum (strain LMG 29417 / CECT 9101 / MAFF 303099) (Mesorhizobium loti (strain MAFF 303099)).